A 143-amino-acid polypeptide reads, in one-letter code: Periplasmic nitrate reductase, electron transfer subunit (143 aa).

Residues 1–22 (MKKILTLAAIVLAIGGCSGQQA) form the signal peptide. Positions 72, 85, 88, 89, 106, 121, 124, and 125 each coordinate heme c.

It belongs to the NapB family. As to quaternary structure, component of the periplasmic nitrate reductase NapAB complex composed of NapA and NapB. Binds 2 heme C groups per subunit.

It localises to the periplasm. Its function is as follows. Electron transfer subunit of the periplasmic nitrate reductase complex NapAB. Receives electrons from the membrane-anchored tetraheme c-type CymA protein and transfers these to NapA subunit, thus allowing electron flow between membrane and periplasm. Not essential for nitrate reduction but confers advantage to the organism when grown on nitrate and thereby a fitness gain in utilizing nitrate. In Shewanella oneidensis (strain ATCC 700550 / JCM 31522 / CIP 106686 / LMG 19005 / NCIMB 14063 / MR-1), this protein is Periplasmic nitrate reductase, electron transfer subunit.